A 367-amino-acid chain; its full sequence is Anhydro-N-acetylmuramic acid kinase (367 aa).

Residue G11–D18 coordinates ATP.

It belongs to the anhydro-N-acetylmuramic acid kinase family.

It catalyses the reaction 1,6-anhydro-N-acetyl-beta-muramate + ATP + H2O = N-acetyl-D-muramate 6-phosphate + ADP + H(+). It functions in the pathway amino-sugar metabolism; 1,6-anhydro-N-acetylmuramate degradation. The protein operates within cell wall biogenesis; peptidoglycan recycling. Functionally, catalyzes the specific phosphorylation of 1,6-anhydro-N-acetylmuramic acid (anhMurNAc) with the simultaneous cleavage of the 1,6-anhydro ring, generating MurNAc-6-P. Is required for the utilization of anhMurNAc either imported from the medium or derived from its own cell wall murein, and thus plays a role in cell wall recycling. This is Anhydro-N-acetylmuramic acid kinase from Bradyrhizobium diazoefficiens (strain JCM 10833 / BCRC 13528 / IAM 13628 / NBRC 14792 / USDA 110).